Consider the following 558-residue polypeptide: 5-aminolevulinate synthase, mitochondrial (558 aa).

Residues 1–25 (MERVVKLAAKHCPFVSKADPSALRR) constitute a mitochondrion transit peptide. The tract at residues 103-124 (TTTPVTKKHQMPKHYASDLNGV) is disordered. Substrate is bound by residues R152, S265, and K284. Residues S317, H345, and T374 each coordinate pyridoxal 5'-phosphate. The active site involves K377. An N6-(pyridoxal phosphate)lysine modification is found at K377. Pyridoxal 5'-phosphate is bound by residues T406 and T407. T492 contacts substrate.

It belongs to the class-II pyridoxal-phosphate-dependent aminotransferase family. Homodimer. It depends on pyridoxal 5'-phosphate as a cofactor.

It is found in the mitochondrion matrix. The catalysed reaction is succinyl-CoA + glycine + H(+) = 5-aminolevulinate + CO2 + CoA. The protein operates within porphyrin-containing compound metabolism; protoporphyrin-IX biosynthesis; 5-aminolevulinate from glycine: step 1/1. In terms of biological role, catalyzes the synthesis of 5-aminolevulinate (ALA) from succinyl-CoA and glycine, the first and rate-limiting step in heme biosynthesis. In Schizosaccharomyces pombe (strain 972 / ATCC 24843) (Fission yeast), this protein is 5-aminolevulinate synthase, mitochondrial.